The sequence spans 2279 residues: Zinc finger protein 318 (2279 aa).

2 stretches are compositionally biased toward low complexity: residues 1 to 12 (MYRSSARSSVSS) and 25 to 39 (SGRSSGSSSGPARRS). Disordered stretches follow at residues 1-140 (MYRS…PGLC) and 164-189 (RRRLSDRLGSPVDNLEDMDRDDLTDD). The interval 1–1092 (MYRSSARSSV…THMHNKKHTQ (1092 aa)) is interaction with AR. Residue Ser-40 is modified to Phosphoserine. Residues 53-67 (PARRPRSPSGHRGRR) show a composition bias toward basic residues. Phosphoserine is present on residues Ser-79 and Ser-81. Basic and acidic residues predominate over residues 110–132 (SRGESRADYARDGRGDHPGDSGS). Phosphoserine is present on residues Ser-136 and Ser-173. Residues 177–188 (NLEDMDRDDLTD) are compositionally biased toward acidic residues. Tyr-205 carries the phosphotyrosine modification. 2 positions are modified to phosphoserine: Ser-207 and Ser-214. 2 disordered regions span residues 279–346 (TVKI…DGGG) and 397–416 (LESFSSSTSSSQDHPLYSGH). The segment covering 311–333 (LDPEFRELDLARRKREEEEERSR) has biased composition (basic and acidic residues). Residues 315 to 343 (FRELDLARRKREEEEERSRSLSQELVGVD) adopt a coiled-coil conformation. Phosphoserine occurs at positions 464, 472, 501, and 527. Disordered stretches follow at residues 514–533 (LADSTSTQEKRRRSFPDIED) and 540–570 (GDEEEDLKAESVPKPLGSSESEVMRQKASSL). Residues Lys-547, Lys-553, Lys-566, and Lys-578 each participate in a glycyl lysine isopeptide (Lys-Gly) (interchain with G-Cter in SUMO2) cross-link. A compositionally biased stretch (basic and acidic residues) spans 664–683 (FSADRRSSDPHRLESREAHH). The disordered stretch occupies residues 664–709 (FSADRRSSDPHRLESREAHHSNTHSPEVSHPHPPSPVDPYLLTKNS). Residue Thr-842 is modified to Phosphothreonine. The stretch at 876-980 (EKISDEKNRA…SELDKVAQIL (105 aa)) forms a coiled coil. 2 stretches are compositionally biased toward basic and acidic residues: residues 922–941 (QQGEMLRKKRREKDGHKDPL) and 989–1012 (QKSLSDSREPTEKPGKAEKSKSPE). Disordered stretches follow at residues 922–942 (QQGEMLRKKRREKDGHKDPLL) and 989–1051 (QKSL…TKQL). Ser-1010 bears the Phosphoserine mark. Positions 1013-1023 (KVSSFSNSSSN) are enriched in low complexity. Basic and acidic residues predominate over residues 1024–1034 (KESKVNNEKFR). Position 1037 is a phosphoserine (Ser-1037). 2 Matrin-type zinc fingers span residues 1063–1097 (AGNHWCKDCNTICGTMFDFFTHMHNKKHTQTLDPY) and 1136–1166 (FYCQLCEEFLGDPISGEQHVKGHQHNEKYKK). Composition is skewed to basic and acidic residues over residues 1195–1235 (RRQS…KLED), 1242–1251 (NSPEKAENKR), 1258–1267 (QLKEEVKKES), 1279–1288 (KKPEKEEEKS), and 1296–1316 (SKEEILESSKDKEDGKTEAGK). The disordered stretch occupies residues 1195-1319 (RRQSELKRKL…GKTEAGKAKP (125 aa)). 2 positions are modified to phosphoserine: Ser-1243 and Ser-1267. Residue Ser-1420 is modified to Phosphoserine. Disordered stretches follow at residues 1428 to 1463 (AEKSEPSHLPEQILPPPPPPPPPPPPPPPVIPHPAA), 1577 to 1628 (GKGA…EELH), 1702 to 1735 (SSFQSDTSRDISPEKSELDLGEPGPPGVEPPPQL), and 1753 to 1775 (ESVNQDKESQELRKSEDCRESEI). A compositionally biased stretch (pro residues) spans 1440-1462 (ILPPPPPPPPPPPPPPPVIPHPA). The span at 1602 to 1623 (SNLSRTKSSDTSSTSPLNSSAS) shows a compositional bias: low complexity. Positions 1708–1719 (TSRDISPEKSEL) are enriched in basic and acidic residues. Ser-1713 is modified (phosphoserine). A compositionally biased stretch (pro residues) spans 1724–1734 (PGPPGVEPPPQ). A coiled-coil region spans residues 1768-1792 (EDCRESEIETNTELKERVKELSEGI). Ser-1856, Ser-1896, Ser-1971, Ser-2030, Ser-2035, Ser-2091, Ser-2101, Ser-2189, Ser-2192, and Ser-2243 each carry phosphoserine. The disordered stretch occupies residues 2252 to 2279 (DNMVPQGMPEQETTVGAIQDHTESSVHN).

In terms of assembly, homodimer. Heterodimer of isoform 1 and isoform 2. Isoform 1 and isoform 2 interact with AR. As to expression, expressed in endocrine tissue.

The protein localises to the nucleus. Functionally, acts as a transcriptional corepressor for AR-mediated transactivation function. May act as a transcriptional regulator during spermatogenesis and, in particular, during meiotic division. Its function is as follows. Acts as a transcriptional coactivator for AR-mediated transactivation function. May act as a transcriptional regulator during spermatogenesis and, in particular, during meiotic division. The protein is Zinc finger protein 318 (ZNF318) of Homo sapiens (Human).